Consider the following 106-residue polypeptide: Large ribosomal subunit protein bL21 (106 aa).

Belongs to the bacterial ribosomal protein bL21 family. As to quaternary structure, part of the 50S ribosomal subunit. Contacts protein L20.

This protein binds to 23S rRNA in the presence of protein L20. The chain is Large ribosomal subunit protein bL21 from Chlamydia caviae (strain ATCC VR-813 / DSM 19441 / 03DC25 / GPIC) (Chlamydophila caviae).